The primary structure comprises 592 residues: Sodium- and chloride-dependent transporter XTRP3A (592 aa).

Residues 1-7 (MEKARPQ) are Cytoplasmic-facing. Residues 8 to 28 (WGHPLQFVFACISYAVGLGNV) traverse the membrane as a helical segment. The Extracellular portion of the chain corresponds to 29–42 (WRFPYLCQMYGGGS). A helical transmembrane segment spans residues 43 to 63 (FLVPYIIMLIVEGMPLLYLEL). The Cytoplasmic portion of the chain corresponds to 64–79 (AVGQRMRQGSIGAWRT). Residues 80–100 (ISPYLSGVGVASVVVSFFLSM) form a helical membrane-spanning segment. The Extracellular portion of the chain corresponds to 101 to 165 (YYNVINAWGF…ISPSIQENGG (65 aa)). An N-linked (GlcNAc...) asparagine glycan is attached at Asn131. The helical transmembrane segment at 166-186 (VQWEPALCLTLAWLMVYLCIL) threads the bilayer. The Cytoplasmic portion of the chain corresponds to 187 to 194 (RGTESTGK). A helical membrane pass occupies residues 195–215 (VVYFTASMPYCVLIIYLVRGL). Residues 216–241 (TLHGATNGLMYMFTPKMEQLANPKAW) lie on the Extracellular side of the membrane. Residues 242-262 (INAATQIFFSLGLGFGSLIAF) form a helical membrane-spanning segment. Residues 263–276 (ASYNEPSNNCQKHA) are Cytoplasmic-facing. The chain crosses the membrane as a helical span at residues 277–297 (IIVSIINSSTSIFASIVTFSI). The Extracellular segment spans residues 298–389 (YGFKATFNYE…EAIKNMEVSQ (92 aa)). A helical membrane pass occupies residues 390–410 (LWSVLYFFMLLMLGIGSMLGN). Residues 411-431 (TAAILTPLTDSKVISSYLPKE) are Cytoplasmic-facing. The helical transmembrane segment at 432 to 452 (AISGLVCLINCAVGMVFTMEA) threads the bilayer. At 453 to 465 (GNYWFDIFNDYAA) the chain is on the extracellular side. Residues 466–486 (TLSLLLIVLVETIAVCYVYGL) traverse the membrane as a helical segment. At 487–504 (KRFESDLRAMTGRTLSWY) the chain is on the cytoplasmic side. The helical transmembrane segment at 505–525 (WKVMWAFVSPLLIVGLFIFYL) threads the bilayer. Over 526-554 (SDYILTGTLQYQAWDATQGQLVTKDYPPH) the chain is Extracellular. The helical transmembrane segment at 555–575 (ALAVIGLLVASSTMCIPLVAL) threads the bilayer. At 576-592 (GTFIRNRLKRGGSAPVA) the chain is on the cytoplasmic side.

This sequence belongs to the sodium:neurotransmitter symporter (SNF) (TC 2.A.22) family. SLC6A20 subfamily. As to expression, expressed in brain, kidney, small intestine, thymus, spleen and lung. In the brain, expressed in cerebellum, cortex and brain stem. Not detected in liver, muscle or heart. In brain, widespread in various regions, including the meninges, choroid plexus, cortex, hippocampus and thalamus.

It localises to the apical cell membrane. The catalysed reaction is L-proline(out) + chloride(out) + 2 Na(+)(out) = L-proline(in) + chloride(in) + 2 Na(+)(in). It catalyses the reaction 4-hydroxy-L-proline(out) + chloride(out) + 2 Na(+)(out) = 4-hydroxy-L-proline(in) + chloride(in) + 2 Na(+)(in). The enzyme catalyses 2-methyl-2-(methylamino)propanoate(out) + chloride(out) + 2 Na(+)(out) = 2-methyl-2-(methylamino)propanoate(in) + chloride(in) + 2 Na(+)(in). It carries out the reaction L-pipecolate(out) + chloride(out) + 2 Na(+)(out) = L-pipecolate(in) + chloride(in) + 2 Na(+)(in). The catalysed reaction is glycine betaine(out) + chloride(out) + 2 Na(+)(out) = glycine betaine(in) + chloride(in) + 2 Na(+)(in). It catalyses the reaction glycine(out) + chloride(out) + 2 Na(+)(out) = glycine(in) + chloride(in) + 2 Na(+)(in). In terms of biological role, mediates the Na(+)- and Cl(-)-dependent uptake of imino acids such as L-proline, N-methyl-L-proline and pipecolate as well as N-methylated amino acids. Also transports glycine, regulates proline and glycine homeostasis in the brain playing a role in the modulation of NMDAR currents. The polypeptide is Sodium- and chloride-dependent transporter XTRP3A (Mus musculus (Mouse)).